A 445-amino-acid polypeptide reads, in one-letter code: Phosphoglucosamine mutase (445 aa).

The active-site Phosphoserine intermediate is the Ser-101. 4 residues coordinate Mg(2+): Ser-101, Asp-240, Asp-242, and Asp-244. Position 101 is a phosphoserine (Ser-101).

The protein belongs to the phosphohexose mutase family. It depends on Mg(2+) as a cofactor. In terms of processing, activated by phosphorylation.

The enzyme catalyses alpha-D-glucosamine 1-phosphate = D-glucosamine 6-phosphate. In terms of biological role, catalyzes the conversion of glucosamine-6-phosphate to glucosamine-1-phosphate. The sequence is that of Phosphoglucosamine mutase from Pseudomonas fluorescens (strain Pf0-1).